The primary structure comprises 345 residues: Phenylalanine--tRNA ligase alpha subunit (345 aa).

A Mg(2+)-binding site is contributed by Glu266.

The protein belongs to the class-II aminoacyl-tRNA synthetase family. Phe-tRNA synthetase alpha subunit type 1 subfamily. As to quaternary structure, tetramer of two alpha and two beta subunits. It depends on Mg(2+) as a cofactor.

It is found in the cytoplasm. It carries out the reaction tRNA(Phe) + L-phenylalanine + ATP = L-phenylalanyl-tRNA(Phe) + AMP + diphosphate + H(+). This chain is Phenylalanine--tRNA ligase alpha subunit, found in Methylibium petroleiphilum (strain ATCC BAA-1232 / LMG 22953 / PM1).